We begin with the raw amino-acid sequence, 356 residues long: Peptide chain release factor 1 (356 aa).

Q233 carries the N5-methylglutamine modification.

The protein belongs to the prokaryotic/mitochondrial release factor family. In terms of processing, methylated by PrmC. Methylation increases the termination efficiency of RF1.

It is found in the cytoplasm. Functionally, peptide chain release factor 1 directs the termination of translation in response to the peptide chain termination codons UAG and UAA. The polypeptide is Peptide chain release factor 1 (Bacillus licheniformis (strain ATCC 14580 / DSM 13 / JCM 2505 / CCUG 7422 / NBRC 12200 / NCIMB 9375 / NCTC 10341 / NRRL NRS-1264 / Gibson 46)).